The primary structure comprises 147 residues: D(1B) dopamine receptor (147 aa).

Residues 1–12 (SILISFPVQLNW) traverse the membrane as a helical segment. Over 13 to 55 (HRDQAGSWGGLDLTNNLANWTPWEEDVWEPDVRAENCDSSLNR) the chain is Extracellular. Residue asparagine 54 is glycosylated (N-linked (GlcNAc...) asparagine). A helical transmembrane segment spans residues 56-78 (TYAISSSLVSFYIPVAIMIVTYT). Topologically, residues 79 to 128 (RIYRIAQVQIRRISSLERAAEHAQSCRSSAACAPDTSLRASIKKETKVLK) are cytoplasmic. The chain crosses the membrane as a helical span at residues 129-147 (TLSVIMGVFVCCWLPFFIL).

Belongs to the G-protein coupled receptor 1 family.

The protein localises to the cell membrane. Functionally, dopamine receptor whose activity is mediated by G proteins which activate adenylyl cyclase. This chain is D(1B) dopamine receptor (DRD5), found in Macaca mulatta (Rhesus macaque).